The sequence spans 439 residues: Tol-Pal system protein TolB (439 aa).

Positions 1–22 are cleaved as a signal peptide; sequence MTKFPRWLAMLVGLLFPLSALT.

The protein belongs to the TolB family. The Tol-Pal system is composed of five core proteins: the inner membrane proteins TolA, TolQ and TolR, the periplasmic protein TolB and the outer membrane protein Pal. They form a network linking the inner and outer membranes and the peptidoglycan layer.

It is found in the periplasm. In terms of biological role, part of the Tol-Pal system, which plays a role in outer membrane invagination during cell division and is important for maintaining outer membrane integrity. The chain is Tol-Pal system protein TolB from Xylella fastidiosa (strain Temecula1 / ATCC 700964).